The primary structure comprises 184 residues: ATP synthase subunit b, chloroplastic (184 aa).

The helical transmembrane segment at L31–L53 threads the bilayer.

This sequence belongs to the ATPase B chain family. F-type ATPases have 2 components, F(1) - the catalytic core - and F(0) - the membrane proton channel. F(1) has five subunits: alpha(3), beta(3), gamma(1), delta(1), epsilon(1). F(0) has four main subunits: a(1), b(1), b'(1) and c(10-14). The alpha and beta chains form an alternating ring which encloses part of the gamma chain. F(1) is attached to F(0) by a central stalk formed by the gamma and epsilon chains, while a peripheral stalk is formed by the delta, b and b' chains.

It localises to the plastid. The protein localises to the chloroplast thylakoid membrane. F(1)F(0) ATP synthase produces ATP from ADP in the presence of a proton or sodium gradient. F-type ATPases consist of two structural domains, F(1) containing the extramembraneous catalytic core and F(0) containing the membrane proton channel, linked together by a central stalk and a peripheral stalk. During catalysis, ATP synthesis in the catalytic domain of F(1) is coupled via a rotary mechanism of the central stalk subunits to proton translocation. Functionally, component of the F(0) channel, it forms part of the peripheral stalk, linking F(1) to F(0). This chain is ATP synthase subunit b, chloroplastic, found in Cycas taitungensis (Prince sago).